The sequence spans 381 residues: Queuine tRNA-ribosyltransferase (381 aa).

Aspartate 92 functions as the Proton acceptor in the catalytic mechanism. Substrate contacts are provided by residues 92-96 (DSGGF), aspartate 146, glutamine 190, and glycine 217. The RNA binding stretch occupies residues 248–254 (GVGRPED). Catalysis depends on aspartate 267, which acts as the Nucleophile. The segment at 272–276 (TRNAR) is RNA binding; important for wobble base 34 recognition. 4 residues coordinate Zn(2+): cysteine 305, cysteine 307, cysteine 310, and histidine 337.

The protein belongs to the queuine tRNA-ribosyltransferase family. Homodimer. Within each dimer, one monomer is responsible for RNA recognition and catalysis, while the other monomer binds to the replacement base PreQ1. It depends on Zn(2+) as a cofactor.

It carries out the reaction 7-aminomethyl-7-carbaguanine + guanosine(34) in tRNA = 7-aminomethyl-7-carbaguanosine(34) in tRNA + guanine. The protein operates within tRNA modification; tRNA-queuosine biosynthesis. Catalyzes the base-exchange of a guanine (G) residue with the queuine precursor 7-aminomethyl-7-deazaguanine (PreQ1) at position 34 (anticodon wobble position) in tRNAs with GU(N) anticodons (tRNA-Asp, -Asn, -His and -Tyr). Catalysis occurs through a double-displacement mechanism. The nucleophile active site attacks the C1' of nucleotide 34 to detach the guanine base from the RNA, forming a covalent enzyme-RNA intermediate. The proton acceptor active site deprotonates the incoming PreQ1, allowing a nucleophilic attack on the C1' of the ribose to form the product. After dissociation, two additional enzymatic reactions on the tRNA convert PreQ1 to queuine (Q), resulting in the hypermodified nucleoside queuosine (7-(((4,5-cis-dihydroxy-2-cyclopenten-1-yl)amino)methyl)-7-deazaguanosine). This chain is Queuine tRNA-ribosyltransferase, found in Xanthomonas euvesicatoria pv. vesicatoria (strain 85-10) (Xanthomonas campestris pv. vesicatoria).